The following is a 349-amino-acid chain: MDTTFKAAAVQAEPVWMDAAATADKTVTLVAKAAAAGAQLVAFPELWIPGYPGFMLTHNQTETLPFIIKYRKQAIAADGPEIEKIRCAAQEHNIALSFGYSERAGRTLYMSQMLIDADGITKIRRRKLKPTRFERELFGEGDGSDLQVAQTSVGRVGALNCAENLQSLNKFALAAEGEQIHISAWPFTLGSPVLVGDSIGAINQVYAAETGTFVLMSTQVVGPTGIAAFEIEDRYNPNQYLGGGYARIYGPDMQLKSKSLSPTEEGIVYAEIDLSMLEAAKYSLDPTGHYSRPDVFSVSINRQRQPAVSEVIDSNGDEDPRAACEPDEGDREVVISTAIGVLPRYCGHS.

The 270-residue stretch at 5–274 folds into the CN hydrolase domain; the sequence is FKAAAVQAEP…EGIVYAEIDL (270 aa). Glu45 acts as the Proton acceptor in catalysis. Lys127 serves as the catalytic Proton donor. Cys161 functions as the Nucleophile in the catalytic mechanism.

Belongs to the carbon-nitrogen hydrolase superfamily. Nitrilase family. In terms of assembly, homodimer.

The catalysed reaction is a nitrile + 2 H2O = a carboxylate + NH4(+). Specific for the herbicide bromoxynil (3,5-dibromo-4-hydroxybenzonitrile); converts it to its metabolite 3,5-dibromo-4-hydroxybenzoic acid. The sequence is that of Nitrilase, bromoxynil-specific (bxn) from Klebsiella pneumoniae subsp. ozaenae.